A 99-amino-acid polypeptide reads, in one-letter code: Acylphosphatase (99 aa).

An Acylphosphatase-like domain is found at 5 to 97 (IRQVMISGRV…QPGERFSILS (93 aa)). Active-site residues include R20 and N38.

Belongs to the acylphosphatase family.

It carries out the reaction an acyl phosphate + H2O = a carboxylate + phosphate + H(+). This Rhodopseudomonas palustris (strain ATCC BAA-98 / CGA009) protein is Acylphosphatase (acyP).